Consider the following 291-residue polypeptide: ATP synthase gamma chain (291 aa).

The protein belongs to the ATPase gamma chain family. As to quaternary structure, F-type ATPases have 2 components, CF(1) - the catalytic core - and CF(0) - the membrane proton channel. CF(1) has five subunits: alpha(3), beta(3), gamma(1), delta(1), epsilon(1). CF(0) has three main subunits: a, b and c.

It is found in the cell inner membrane. Produces ATP from ADP in the presence of a proton gradient across the membrane. The gamma chain is believed to be important in regulating ATPase activity and the flow of protons through the CF(0) complex. The sequence is that of ATP synthase gamma chain from Cupriavidus pinatubonensis (strain JMP 134 / LMG 1197) (Cupriavidus necator (strain JMP 134)).